The primary structure comprises 185 residues: Ribosome-recycling factor (185 aa).

Belongs to the RRF family.

It is found in the cytoplasm. In terms of biological role, responsible for the release of ribosomes from messenger RNA at the termination of protein biosynthesis. May increase the efficiency of translation by recycling ribosomes from one round of translation to another. In Proteus mirabilis (strain HI4320), this protein is Ribosome-recycling factor.